Reading from the N-terminus, the 346-residue chain is MAKRKLTQNQTRRIQSNNAKTLHRHKKKEIEWSDEMLGESQEGVVVTRYSIHADVENEQGEIYRCNLRRTLSSLVVGDKVVWRKGNEQLQGVSGVIEAIHPRENEISRPDYYDGLKPIAANIDRIIIVSAVLPTLSLNIIDRYLVVCEIAGITPLIVLNKVDLLAQEQRQEIEDQLKIYQDIGYEILMISAKSGENMEKLTALLAQGTAIFVGQSGVGKSSLINHILPSVNAQVGDVSETSGLGQHTTTSSRLYHLPQGGNLIDSPGIREFGLWHLDAEQITKGYREFQYVLGTCKFRDCKHLSDPGCALREAVEQGKISPVRYDNYHRLIESLSETKSQRHFSLV.

A disordered region spans residues 1–25; it reads MAKRKLTQNQTRRIQSNNAKTLHRH. Positions 7-20 are enriched in polar residues; sequence TQNQTRRIQSNNAK. Residues 103-271 enclose the CP-type G domain; it reads ENEISRPDYY…LIDSPGIREF (169 aa). GTP-binding positions include 159–162 and 213–221; these read NKVD and GQSGVGKSS. Cysteine 295, cysteine 300, histidine 302, and cysteine 308 together coordinate Zn(2+).

This sequence belongs to the TRAFAC class YlqF/YawG GTPase family. RsgA subfamily. In terms of assembly, monomer. Associates with 30S ribosomal subunit, binds 16S rRNA. Requires Zn(2+) as cofactor.

It is found in the cytoplasm. Functionally, one of several proteins that assist in the late maturation steps of the functional core of the 30S ribosomal subunit. Helps release RbfA from mature subunits. May play a role in the assembly of ribosomal proteins into the subunit. Circularly permuted GTPase that catalyzes slow GTP hydrolysis, GTPase activity is stimulated by the 30S ribosomal subunit. The chain is Small ribosomal subunit biogenesis GTPase RsgA from Haemophilus influenzae (strain ATCC 51907 / DSM 11121 / KW20 / Rd).